We begin with the raw amino-acid sequence, 122 residues long: Large ribosomal subunit protein uL14 (122 aa).

It belongs to the universal ribosomal protein uL14 family. As to quaternary structure, part of the 50S ribosomal subunit. Forms a cluster with proteins L3 and L19. In the 70S ribosome, L14 and L19 interact and together make contacts with the 16S rRNA in bridges B5 and B8.

Functionally, binds to 23S rRNA. Forms part of two intersubunit bridges in the 70S ribosome. In Lactobacillus acidophilus (strain ATCC 700396 / NCK56 / N2 / NCFM), this protein is Large ribosomal subunit protein uL14.